Here is a 344-residue protein sequence, read N- to C-terminus: Glutamine synthetase (344 aa).

In terms of domain architecture, GS beta-grasp spans 4-86; that stretch reads YKLEYIWLDG…VMCEVMMPDG (83 aa). Residues 89 to 344 enclose the GS catalytic domain; it reads PHASNKRATI…SVPTEKKAVA (256 aa). E109 and E111 together coordinate Mg(2+). An ATP-binding site is contributed by E167. Residues E172 and E179 each coordinate Mg(2+). E278 serves as a coordination point for L-glutamate.

It belongs to the glutamine synthetase family. As to quaternary structure, homooctamer and homotetramer. It depends on Mg(2+) as a cofactor.

The protein resides in the cytoplasm. The catalysed reaction is L-glutamate + NH4(+) + ATP = L-glutamine + ADP + phosphate + H(+). Catalyzes the ATP-dependent biosynthesis of glutamine from glutamate and ammonia. The polypeptide is Glutamine synthetase (Bradyrhizobium diazoefficiens (strain JCM 10833 / BCRC 13528 / IAM 13628 / NBRC 14792 / USDA 110)).